We begin with the raw amino-acid sequence, 500 residues long: Glutamate--tRNA ligase (500 aa).

Residues 12–22 carry the 'HIGH' region motif; the sequence is PSPTGHLHIGN. The 'KMSKS' region motif lies at 259-263; that stretch reads KLSKR. K262 is a binding site for ATP.

The protein belongs to the class-I aminoacyl-tRNA synthetase family. Glutamate--tRNA ligase type 1 subfamily. As to quaternary structure, monomer.

It is found in the cytoplasm. It catalyses the reaction tRNA(Glu) + L-glutamate + ATP = L-glutamyl-tRNA(Glu) + AMP + diphosphate. In terms of biological role, catalyzes the attachment of glutamate to tRNA(Glu) in a two-step reaction: glutamate is first activated by ATP to form Glu-AMP and then transferred to the acceptor end of tRNA(Glu). The protein is Glutamate--tRNA ligase of Lactobacillus delbrueckii subsp. bulgaricus.